A 1661-amino-acid chain; its full sequence is Cortactin-binding protein 2 (1661 aa).

Disordered regions lie at residues 1–27, 206–226, 329–438, 454–477, and 493–612; these read MATD…AEAT, EKKR…RSTE, TVPV…SLHP, NAND…SPTS, and QALS…LPPK. Positions 124–280 form a coiled coil; sequence KMQERMSTQL…EQLKRGNDSK (157 aa). Positions 383 to 394 are enriched in low complexity; sequence GPSTGSTPDLPS. The segment covering 412-426 has biased composition (polar residues); the sequence is SIASQNYSQASSLHS. Low complexity predominate over residues 454-466; sequence NANDQDQNGNTTQ. Positions 467 to 477 are enriched in polar residues; the sequence is SPPSRDVSPTS. R497 is subject to Asymmetric dimethylarginine. 5 ANK repeats span residues 707 to 737, 741 to 770, 774 to 803, 807 to 836, and 840 to 869; these read GRPT…DINY, DGHS…QVNA, NGFT…NINH, GGQT…DRSV, and DGWT…PACG. A disordered region spans residues 876–896; it reads EPESDVFDLDGGGERPEGTVK. One copy of the ANK 6 repeat lies at 910-940; it reads EGWTAAHIAASKGFKNCLEILCQHGGLEPER. The segment at 1444–1480 is disordered; that stretch reads GKKKGENGAWRKVSTSPRKKSGRFPSPTWSKPDLSDE. S1522 carries the phosphoserine modification. Disordered stretches follow at residues 1555–1597 and 1614–1661; these read RRFD…SNSK and PRSK…KPNK. Over residues 1580–1597 the composition is skewed to polar residues; sequence KEVSPLSSHQTTECSNSK. Residues 1622–1636 show a composition bias toward low complexity; the sequence is SQNTRRSSSSSNTRQ. Residues 1643 to 1661 are compositionally biased toward basic and acidic residues; the sequence is SKDEIWNLRKNEQVEKPNK.

Interacts with CTTN/cortactin SH3 domain. Interacts with STRN, STRN4/zinedin and MOB4/phocein; this interactions mediate the association with the STRIPAK core complex and may regulate dendritic spine distribution of the STRIPAK complex in hippocampal neurons. Activation of glutamate receptors weakens the interaction with STRN and STRN4.

The protein resides in the cytoplasm. It is found in the cell cortex. It localises to the cell projection. Its subcellular location is the dendritic spine. Its function is as follows. Regulates the dendritic spine distribution of CTTN/cortactin in hippocampal neurons, and thus controls dendritic spinogenesis and dendritic spine maintenance. Associates with the striatin-interacting phosphatase and kinase (STRIPAK) core complex to regulate dendritic spine distribution of the STRIPAK complex in hippocampal neurons. In Loxodonta africana (African elephant), this protein is Cortactin-binding protein 2 (CTTNBP2).